A 368-amino-acid chain; its full sequence is MPFQLLQTDGHARLGRLICNQGIVDTPAFMPVGTYGSIKTLTAKEVEASGTQIILSNTFHLWLRPGLDIIKLHGSLHKFMSWNGPIITDSGGFQVFSLSKTRTITRKGVGFKSPIDGHLVFLTPEKSIEIQHDLQSDIVMIFDECISYPNTWDYVKKSVNISLNWAERSRLRFDTLHNSNMLFAIIQGGMYENLRDMSAKELINIGFDGYAIGGLSVGEPKKEMYRILSHICKLIPTNKPRYLMGAGKPEDLLEAVQKGIDMFDCVIPTRNARNGYLFVSDGTIKIRNAQYKKDTSPLDGNCDCYTCQHYSRSYLHHLDCCKEILGVRLNTIHNLRYYQRLMEELRQAIKTKSLQNFIDIFYKRVNRI.

The active-site Proton acceptor is aspartate 89. Substrate is bound by residues 89–93 (DSGGF), aspartate 143, glutamine 187, and glycine 214. The Nucleophile role is filled by aspartate 264. The segment at 269–273 (TRNAR) is RNA binding; important for wobble base 34 recognition. Residues cysteine 302, cysteine 304, cysteine 307, and histidine 333 each contribute to the Zn(2+) site.

This sequence belongs to the queuine tRNA-ribosyltransferase family. In terms of assembly, homodimer. Within each dimer, one monomer is responsible for RNA recognition and catalysis, while the other monomer binds to the replacement base PreQ1. It depends on Zn(2+) as a cofactor.

The enzyme catalyses 7-aminomethyl-7-carbaguanine + guanosine(34) in tRNA = 7-aminomethyl-7-carbaguanosine(34) in tRNA + guanine. The protein operates within tRNA modification; tRNA-queuosine biosynthesis. In terms of biological role, catalyzes the base-exchange of a guanine (G) residue with the queuine precursor 7-aminomethyl-7-deazaguanine (PreQ1) at position 34 (anticodon wobble position) in tRNAs with GU(N) anticodons (tRNA-Asp, -Asn, -His and -Tyr). Catalysis occurs through a double-displacement mechanism. The nucleophile active site attacks the C1' of nucleotide 34 to detach the guanine base from the RNA, forming a covalent enzyme-RNA intermediate. The proton acceptor active site deprotonates the incoming PreQ1, allowing a nucleophilic attack on the C1' of the ribose to form the product. After dissociation, two additional enzymatic reactions on the tRNA convert PreQ1 to queuine (Q), resulting in the hypermodified nucleoside queuosine (7-(((4,5-cis-dihydroxy-2-cyclopenten-1-yl)amino)methyl)-7-deazaguanosine). The polypeptide is Queuine tRNA-ribosyltransferase (Blochmanniella pennsylvanica (strain BPEN)).